A 419-amino-acid polypeptide reads, in one-letter code: MVPALRYLVGACGRARGGFAGDFPGASGLASGRPRPLCGGSRSASTSSFDIVIVGGGIVGLASARALILRHPSLSIGVLEKEKDLAVHQTGHNSGVIHSGIYYKPESLKAKLCVQGAALLYEYCQQKGISYKQCGKLIVAVEQEEIPRLQALYERGLQNGVQGLRLIQQDDIKKKEPYCRGLMAIDCPHTGIVDYRQVALSFAQDFQDAGGSVLTNFEVKDIEMAKESLSRSIDGMQYPIVIKNIKGEEIRCQYVVTCAGLYSDRISELSGCSPDPRIVSFRGDYLLLKPEKCYLVKGNIYPVPDSRFPFLGVHFTLRMDGSIWLGPNAVLAFKREGYRPFDFSATDVMDIIINRGPAGVRAQALDRDGNLVDDFVFDAGVGDIGNRILHVRNAPSPAATSSIAISGMIADEVQQRFEL.

The transit peptide at 1–51 (MVPALRYLVGACGRARGGFAGDFPGASGLASGRPRPLCGGSRSASTSSFDI) directs the protein to the mitochondrion. N6-acetyllysine occurs at positions 104 and 173.

The protein belongs to the L2HGDH family. It depends on FAD as a cofactor.

The protein localises to the mitochondrion. The enzyme catalyses (S)-2-hydroxyglutarate + A = 2-oxoglutarate + AH2. This chain is L-2-hydroxyglutarate dehydrogenase, mitochondrial (L2HGDH), found in Pongo abelii (Sumatran orangutan).